The following is a 507-amino-acid chain: Fumarate hydratase, mitochondrial (507 aa).

Residues 1–41 (MYRALRLLARSRRLLRVPSAGAAVSGEATTLPRCAPNVARM) constitute a mitochondrion transit peptide. N6-acetyllysine; alternate is present on residues Lys58, Lys63, and Lys77. N6-succinyllysine; alternate is present on residues Lys58, Lys63, and Lys77. Phosphothreonine is present on Thr82. N6-acetyllysine; alternate is present on residues Lys112 and Lys119. N6-succinyllysine; alternate occurs at positions 112 and 119. Substrate contacts are provided by residues 142–144 (SGT), 173–176 (HPND), and 183–185 (SSN). Lys210 is subject to N6-acetyllysine. Lys220 is modified (N6-acetyllysine; alternate). Lys220 carries the N6-succinyllysine; alternate modification. Substrate is bound at residue Thr231. Residue His232 is the Proton donor/acceptor of the active site. The residue at position 233 (Thr233) is a Phosphothreonine. Lys289 carries the N6-acetyllysine; alternate modification. An N6-succinyllysine; alternate modification is found at Lys289. Residue Ser362 is part of the active site. Substrate-binding positions include Ser363 and 368-370 (KVN). Position 363 is a phosphoserine (Ser363). 2 positions are modified to N6-succinyllysine: Lys464 and Lys470. Lys499 carries the post-translational modification N6-acetyllysine.

This sequence belongs to the class-II fumarase/aspartase family. Fumarase subfamily. As to quaternary structure, homotetramer. Interacts with H2AZ1. In terms of processing, phosphorylation at Thr-233 by PRKDC in response to DNA damage promotes translocation to the nucleus and recruitment to DNA double-strand breaks (DSBs).

The protein resides in the mitochondrion. It is found in the cytoplasm. It localises to the cytosol. Its subcellular location is the nucleus. The protein localises to the chromosome. It carries out the reaction (S)-malate = fumarate + H2O. It functions in the pathway carbohydrate metabolism; tricarboxylic acid cycle; (S)-malate from fumarate: step 1/1. In terms of biological role, catalyzes the reversible stereospecific interconversion of fumarate to L-malate. Experiments in different species have demonstrated that specific isoforms of this protein act in defined pathways and favor one direction over the other. Catalyzes the hydration of fumarate to L-malate in the tricarboxylic acid (TCA) cycle to facilitate a transition step in the production of energy in the form of NADH. Functionally, catalyzes the dehydration of L-malate to fumarate. Fumarate metabolism in the cytosol plays a role during urea cycle and arginine metabolism; fumarate being a by-product of the urea cycle and amino-acid catabolism. Also plays a role in DNA repair by promoting non-homologous end-joining (NHEJ). In response to DNA damage and phosphorylation by PRKDC, translocates to the nucleus and accumulates at DNA double-strand breaks (DSBs): acts by catalyzing formation of fumarate, an inhibitor of KDM2B histone demethylase activity, resulting in enhanced dimethylation of histone H3 'Lys-36' (H3K36me2). This is Fumarate hydratase, mitochondrial from Mus musculus (Mouse).